The sequence spans 183 residues: NADH-quinone oxidoreductase subunit A (183 aa).

3 helical membrane-spanning segments follow: residues 11 to 31, 63 to 83, and 98 to 118; these read IIAF…VPLL, FYLV…LYAW, and VVIF…VGAL. Residues 159 to 183 form a disordered region; that stretch reads TGQIPAQSSGRVKSKTTPALSSEKE.

This sequence belongs to the complex I subunit 3 family. As to quaternary structure, NDH-1 is composed of 14 different subunits. Subunits NuoA, H, J, K, L, M, N constitute the membrane sector of the complex.

It localises to the cell inner membrane. It catalyses the reaction a quinone + NADH + 5 H(+)(in) = a quinol + NAD(+) + 4 H(+)(out). Functionally, NDH-1 shuttles electrons from NADH, via FMN and iron-sulfur (Fe-S) centers, to quinones in the respiratory chain. The immediate electron acceptor for the enzyme in this species is believed to be ubiquinone. Couples the redox reaction to proton translocation (for every two electrons transferred, four hydrogen ions are translocated across the cytoplasmic membrane), and thus conserves the redox energy in a proton gradient. The protein is NADH-quinone oxidoreductase subunit A of Acinetobacter baumannii (strain AYE).